Consider the following 420-residue polypeptide: Ketoreductase sphF (420 aa).

Positions 1-21 are disordered; that stretch reads MLERPSFPRLGAGTRHHRPLG. The chain crosses the membrane as a helical span at residues 29–49; that stretch reads WLLAFTGISGIAGMMIPYVPW. The disordered stretch occupies residues 275–298; the sequence is RQKRSPSPGRHPALGSPPAQLRQD.

It is found in the membrane. It carries out the reaction 3-oxopresphingofungin + NADPH + 2 H(+) = presphingofungin + NADP(+). Its pathway is secondary metabolite biosynthesis. Its function is as follows. Ketoreductase; part of the gene cluster that mediates the biosynthesis of sphingofungins, bioactive molecules acting as sphingolipid inhibitors via inhibiting serine palmitoyl transferase (SPT). Within the pathway, sphF catalyzes the reduction of the C-3 ketone of 3-keto-presphingofungin to produce presphingofungin. Sphingofungin biosynthesis starts with the PKS sphB that produces an C18 polyketide precursor 3-hydroxyoctadeca-4,10-dienoyl-ACP containing one delta-6 desaturation and one delta-12 desaturation. The aminoacyl transferase sphA uses the sphB product to produce 3-keto-presphingofungin by adding an aminomalonate molecule. SphF then reduces the C-3 ketone of 3-keto-presphingofungin which leads to presphingofungin. The cytochrome P450 monooxygenase sphH converts presphingofungin into sphingofungin B1 which is further converted to sphingofungin B by the dioxygenase sphC. SphC is also able to convert presphingofungin into sphingofungin B2. The acetyltransferase sphE acetylates sphingofungin B to produce sphingofungin C, but can also convert sphingofungin B1 into sphingofungin C1 and sphingofungin B2 into sphingofungin C2. Finally, sphingofungin C can be spontaneously converted into sphingofungin D. This Aspergillus fumigatus (strain CBS 144.89 / FGSC A1163 / CEA10) (Neosartorya fumigata) protein is Ketoreductase sphF.